We begin with the raw amino-acid sequence, 245 residues long: Demethylmenaquinone methyltransferase (245 aa).

S-adenosyl-L-methionine is bound by residues Thr69, Asp90, and 118-119 (DC).

This sequence belongs to the class I-like SAM-binding methyltransferase superfamily. MenG/UbiE family.

The enzyme catalyses a 2-demethylmenaquinol + S-adenosyl-L-methionine = a menaquinol + S-adenosyl-L-homocysteine + H(+). It functions in the pathway quinol/quinone metabolism; menaquinone biosynthesis; menaquinol from 1,4-dihydroxy-2-naphthoate: step 2/2. In terms of biological role, methyltransferase required for the conversion of demethylmenaquinol (DMKH2) to menaquinol (MKH2). This is Demethylmenaquinone methyltransferase from Porphyromonas gingivalis (strain ATCC 33277 / DSM 20709 / CIP 103683 / JCM 12257 / NCTC 11834 / 2561).